The chain runs to 292 residues: MTEFDLSTREGRWKHFGSVDPIEGTKPTTKNEMTDLQSTHKDFLFEIEEVGIKNLVYPVLVDQYQTAGTFSFSTSLTKDEKGINMSRIIESVEKHYDNGIELEFNTLYQVLCTLQTNMKQNAAGVDVSGKWFFDRYSPTTNIKAVGNADVTYGLAIDGDKVTRKELTIEATVTTLCPCSKEISEYSAHNQRGVVTVKTYINKDQDIVDDYKNKILDAMEANASSILYPILKRPDEKRVTERAYENPRFVEDLIRLIAADLVEFDWLEGFDIECRNEESIHQHDAFAKLKYRK.

Belongs to the GTP cyclohydrolase IV family.

It catalyses the reaction GTP + H2O = 7,8-dihydroneopterin 3'-triphosphate + formate + H(+). Its pathway is cofactor biosynthesis; 7,8-dihydroneopterin triphosphate biosynthesis; 7,8-dihydroneopterin triphosphate from GTP: step 1/1. Functionally, converts GTP to 7,8-dihydroneopterin triphosphate. The sequence is that of GTP cyclohydrolase FolE2 from Staphylococcus aureus (strain MRSA252).